The following is a 139-amino-acid chain: uncharacterized protein (139 aa).

The Globin domain maps to 1-133 (MLSEETIRVI…LAKTLITLEK (133 aa)).

Belongs to the globin family.

This is an uncharacterized protein from Aquifex aeolicus (strain VF5).